We begin with the raw amino-acid sequence, 261 residues long: UPF0246 protein azo1887 (261 aa).

The protein belongs to the UPF0246 family.

The sequence is that of UPF0246 protein azo1887 from Azoarcus sp. (strain BH72).